Consider the following 715-residue polypeptide: Palmitoyltransferase ZDHHC5 (715 aa).

Over 1 to 13 (MPAESGKRFKPSK) the chain is Cytoplasmic. A helical transmembrane segment spans residues 14-34 (YVPVSAAAIFLVGATTLFFAF). Topologically, residues 35 to 38 (TCPG) are extracellular. Residues 39–59 (LSLCVSPAVPIYNAIVFLFVL) traverse the membrane as a helical segment. The Cytoplasmic segment spans residues 60 to 148 (ANFSMATFMD…NCIGRRNYRY (89 aa)). Tyrosine 91 bears the Phosphotyrosine mark. The DHHC domain maps to 104 to 154 (KWCATCRFYRPPRCSHCSVCDNCVEEFDHHCPWVNNCIGRRNYRYFFLFLL). Cysteine 134 serves as the catalytic S-palmitoyl cysteine intermediate. The helical transmembrane segment at 149–169 (FFLFLLSLTAHIMGVFGFGLL) threads the bilayer. Topologically, residues 170-191 (YVLYHMEELSGVRTAVTMAVMC) are extracellular. Residues 192 to 212 (VAGLFFIPVAGLTGFHVVLVA) form a helical membrane-spanning segment. The Cytoplasmic segment spans residues 213 to 715 (RGRTTNEQVT…VGGTTYEISV (503 aa)). Phosphoserine is present on residues serine 247, serine 296, and serine 299. The segment at 289–648 (GELRRSKSKG…SQKAPAGVSE (360 aa)) is disordered. Threonine 303 bears the Phosphothreonine mark. Serine 345 is subject to Phosphoserine. A phosphothreonine mark is found at threonine 348 and threonine 350. Positions 359–373 (SSSSTSAAMPHSSSA) are enriched in low complexity. Phosphoserine is present on residues serine 380, serine 398, serine 406, and serine 409. The residue at position 411 (threonine 411) is a Phosphothreonine. Residues serine 415, serine 425, serine 429, and serine 432 each carry the phosphoserine modification. Positions 422–432 (SSGSRSSSLKS) are enriched in low complexity. Threonine 436 carries the post-translational modification Phosphothreonine. Residues 442–478 (QLQSIRSEGTTSTSYKSLANQTRNGSLSYDSLLTPSD) show a composition bias toward polar residues. 2 positions are modified to phosphoserine: serine 529 and serine 554. Residue arginine 617 is modified to Omega-N-methylarginine. A Phosphoserine modification is found at serine 621. Threonine 659 is subject to Phosphothreonine. The tract at residues 666–715 (LKTAYSKSNGQPKSIGSASPGPGQQPLSSPTRGGVKKVSGVGGTTYEISV) is disordered. Over residues 668-679 (TAYSKSNGQPKS) the composition is skewed to polar residues. A compositionally biased stretch (low complexity) spans 681–695 (GSASPGPGQQPLSSP). Residues serine 684 and serine 694 each carry the phosphoserine modification. Position 697 is an omega-N-methylarginine (arginine 697).

It belongs to the DHHC palmitoyltransferase family. ERF2/ZDHHC9 subfamily. In terms of processing, phosphorylation regulates association with endocytic proteins and its subcellular localization. Phosphorylation by LYN during fatty acid uptake leads to inactivation of the activity. Post-translationally, autopalmitoylated. Palmitoylation of the C-terminal tail regulates stimulation-dependent plasma membrane motility.

The protein localises to the cell membrane. The enzyme catalyses L-cysteinyl-[protein] + hexadecanoyl-CoA = S-hexadecanoyl-L-cysteinyl-[protein] + CoA. Its function is as follows. Palmitoyltransferase that catalyzes the addition of palmitate onto various protein substrates such as CTNND2, CD36, GSDMD, NLRP3, NOD1, NOD2, STAT3 and S1PR1 thus plays a role in various biological processes including cell adhesion, inflammation, fatty acid uptake, bacterial sensing or cardiac functions. Plays an important role in the regulation of synapse efficacy by mediating palmitoylation of delta-catenin/CTNND2, thereby increasing synaptic delivery and surface stabilization of alpha-amino-3-hydroxy-5-methyl-4-isoxazole propionic acid receptors (AMPARs). Under basal conditions, remains at the synaptic membrane through FYN-mediated phosphorylation that prevents association with endocytic proteins. Neuronal activity enhances the internalization and trafficking of DHHC5 from spines to dendritic shafts where it palmitoylates delta-catenin/CTNND2. Regulates cell adhesion at the plasma membrane by palmitoylating GOLGA7B and DSG2. Plays a role in innate immune response by mediating the palmitoylation of NOD1 and NOD2 and their proper recruitment to the bacterial entry site and phagosomes. Also participates in fatty acid uptake by palmitoylating CD36 and thereby targeting it to the plasma membrane. Upon binding of fatty acids to CD36, gets phosphorylated by LYN leading to inactivation and subsequent CD36 caveolar endocytosis. Controls oligodendrocyte development by catalyzing STAT3 palmitoylation. Acts as a regulator of inflammatory response by mediating palmitoylation of NLRP3 and GSDMD. Palmitoylates NLRP3 to promote inflammasome assembly and activation. Activates pyroptosis by catalyzing palmitoylation of gasdermin-D (GSDMD), thereby promoting membrane translocation and pore formation of GSDMD. The chain is Palmitoyltransferase ZDHHC5 (ZDHHC5) from Canis lupus familiaris (Dog).